The following is a 646-amino-acid chain: Capsid scaffolding protein (646 aa).

Catalysis depends on charge relay system residues His-55, Ser-123, and His-142. An interaction with pAP region spans residues 336–355; the sequence is GDYILVPAAQYNQLVVGQHT. The disordered stretch occupies residues 421-483; the sequence is TKGSDPHVIQ…RPGERRAGRP (63 aa). The Nuclear localization signal signature appears at 445–451; sequence RYARKRR. Composition is skewed to basic and acidic residues over residues 452 to 462 and 471 to 480; these read HDWDATTRDDL and RSPRPGERRA. An interaction with major capsid protein region spans residues 626–646; sequence TGLEFGRDDADIFVSQMMSAR.

Belongs to the herpesviridae capsid scaffolding protein family. Homomultimer. Interacts with major capsid protein. In terms of assembly, exists in a monomer-dimer equilibrium with the dimer being the active species. Post-translationally, capsid scaffolding protein is cleaved by assemblin after formation of the spherical procapsid. As a result, the capsid obtains its mature, icosahedral shape. Cleavages occur at two or more sites: release (R-site) and maturation (M-site).

Its subcellular location is the host cytoplasm. The protein localises to the host nucleus. It carries out the reaction Cleaves -Ala-|-Ser- and -Ala-|-Ala- bonds in the scaffold protein.. Its function is as follows. Acts as a scaffold protein by binding major capsid protein in the cytoplasm, inducing the nuclear localization of both proteins. Multimerizes in the nucleus such as major capsid protein forms the icosahedral T=16 capsid. Autocatalytic cleavage releases the assembly protein, and subsequently abolishes interaction with major capsid protein. Cleavages products are evicted from the capsid before or during DNA packaging. Functionally, protease that plays an essential role in virion assembly within the nucleus. Catalyzes the cleavage of the assembly protein after formation of the spherical procapsid. By that cleavage, the capsid matures and gains its icosahedral shape. The cleavage sites seem to include -Ala-Ser-, -Ala-Ala-, as well as Ala-Thr bonds. Assemblin and cleavages products are evicted from the capsid before or during DNA packaging. Plays a major role in capsid assembly. Acts as a scaffold protein by binding major capsid protein. Multimerizes in the nucleus such as major capsid protein forms the icosahedral T=16 capsid. Cleaved by assemblin after capsid completion. The cleavages products are evicted from the capsid before or during DNA packaging. This Equus caballus (Horse) protein is Capsid scaffolding protein (35).